Here is a 406-residue protein sequence, read N- to C-terminus: MSASQDSRSRDNGPDGMEPEGVIESNWNEIVDSFDDMNLSESLLRGIYAYGFEKPSAIQQRAILPCIKGYDVIAQAQSGTGKTATFAISILQQIELDLKATQALVLAPTRELAQQIQKVVMALGDYMGASCHACIGGTNVRAEVQKLQMEAPHIIVGTPGRVFDMLNRRYLSPKYIKMFVLDEADEMLSRGFKDQIYDIFQKLNSNTQVVLLSATMPSDVLEVTKKFMRDPIRILVKKEELTLEGIRQFYINVEREEWKLDTLCDLYETLTITQAVIFINTRRKVDWLTEKMHARDFTVSAMHGDMDQKERDVIMREFRSGSSRVLITTDLLARGIDVQQVSLVINYDLPTNRENYIHRIGRGGRFGRKGVAINMVTEEDKRTLRDIETFYNTSIEEMPLNVADLI.

The tract at residues 1-21 is disordered; the sequence is MSASQDSRSRDNGPDGMEPEG. An N-acetylserine modification is found at S2. Phosphoserine is present on S4. Positions 32 to 60 match the Q motif motif; the sequence is DSFDDMNLSESLLRGIYAYGFEKPSAIQQ. A Helicase ATP-binding domain is found at 63–234; the sequence is ILPCIKGYDV…KKFMRDPIRI (172 aa). 76-83 lines the ATP pocket; the sequence is AQSGTGKT. An N6-acetyllysine modification is found at K118. A Glycyl lysine isopeptide (Lys-Gly) (interchain with G-Cter in SUMO2) cross-link involves residue K146. Residue T158 is modified to Phosphothreonine. K174 is subject to N6-acetyllysine. The DEAD box motif lies at 182–185; that stretch reads DEAD. K193 carries the post-translational modification N6-acetyllysine. Residue K225 forms a Glycyl lysine isopeptide (Lys-Gly) (interchain with G-Cter in SUMO2) linkage. K238 is subject to N6-acetyllysine; alternate. K238 is covalently cross-linked (Glycyl lysine isopeptide (Lys-Gly) (interchain with G-Cter in SUMO2); alternate). The Helicase C-terminal domain occupies 245–406; the sequence is GIRQFYINVE…EMPLNVADLI (162 aa). Glycyl lysine isopeptide (Lys-Gly) (interchain with G-Cter in SUMO2) cross-links involve residues K309, K369, and K381.

This sequence belongs to the DEAD box helicase family. eIF4A subfamily. As to quaternary structure, eIF4F is a multi-subunit complex, the composition of which varies with external and internal environmental conditions. It is composed of at least EIF4A, EIF4E and EIF4G1/EIF4G3. Interacts with PAIP1, EIF4E and UPF2. Found in a complex with XPO7, EIF4A1, ARHGAP1, VPS26A, VPS29, VPS35 and SFN. May interact with NOM1. Interacts with PDCD4; this interferes with the interaction between EIF4A and EIF4G. Interacts with RBM4. Interacts with DDX3X in an RNA-independent manner. Interacts with PKP1 (via N-terminus); the interaction promotes EIF4A1 recruitment to the cap-dependent translation complex and EIF4A1 ATPase activity.

Its subcellular location is the cytoplasm. The protein resides in the perinuclear region. It is found in the cell membrane. It localises to the stress granule. It carries out the reaction ATP + H2O = ADP + phosphate + H(+). Its function is as follows. ATP-dependent RNA helicase which is a subunit of the eIF4F complex involved in cap recognition and is required for mRNA binding to ribosome. In the current model of translation initiation, eIF4A unwinds RNA secondary structures in the 5'-UTR of mRNAs which is necessary to allow efficient binding of the small ribosomal subunit, and subsequent scanning for the initiator codon. As a result, promotes cell proliferation and growth. The chain is Eukaryotic initiation factor 4A-I (EIF4A1) from Bos taurus (Bovine).